A 209-amino-acid chain; its full sequence is uncharacterized protein (209 aa).

This is an uncharacterized protein from Caldicellulosiruptor saccharolyticus (Caldocellum saccharolyticum).